Here is a 355-residue protein sequence, read N- to C-terminus: Holliday junction branch migration complex subunit RuvB (355 aa).

Residues Met-1–Pro-26 form a disordered region. Residues Thr-5 to Tyr-196 are large ATPase domain (RuvB-L). Over residues Ala-9–Ala-22 the composition is skewed to low complexity. Residues Leu-35, Arg-36, Gly-77, Lys-80, Thr-81, Thr-82, Glu-143 to Tyr-145, Arg-186, Tyr-196, and Arg-233 each bind ATP. Position 81 (Thr-81) interacts with Mg(2+). Positions Ser-197–Asp-267 are small ATPAse domain (RuvB-S). Residues Pro-270–Ala-355 form a head domain (RuvB-H) region. The DNA site is built by Arg-325 and Arg-330.

The protein belongs to the RuvB family. As to quaternary structure, homohexamer. Forms an RuvA(8)-RuvB(12)-Holliday junction (HJ) complex. HJ DNA is sandwiched between 2 RuvA tetramers; dsDNA enters through RuvA and exits via RuvB. An RuvB hexamer assembles on each DNA strand where it exits the tetramer. Each RuvB hexamer is contacted by two RuvA subunits (via domain III) on 2 adjacent RuvB subunits; this complex drives branch migration. In the full resolvosome a probable DNA-RuvA(4)-RuvB(12)-RuvC(2) complex forms which resolves the HJ.

The protein localises to the cytoplasm. The catalysed reaction is ATP + H2O = ADP + phosphate + H(+). Functionally, the RuvA-RuvB-RuvC complex processes Holliday junction (HJ) DNA during genetic recombination and DNA repair, while the RuvA-RuvB complex plays an important role in the rescue of blocked DNA replication forks via replication fork reversal (RFR). RuvA specifically binds to HJ cruciform DNA, conferring on it an open structure. The RuvB hexamer acts as an ATP-dependent pump, pulling dsDNA into and through the RuvAB complex. RuvB forms 2 homohexamers on either side of HJ DNA bound by 1 or 2 RuvA tetramers; 4 subunits per hexamer contact DNA at a time. Coordinated motions by a converter formed by DNA-disengaged RuvB subunits stimulates ATP hydrolysis and nucleotide exchange. Immobilization of the converter enables RuvB to convert the ATP-contained energy into a lever motion, pulling 2 nucleotides of DNA out of the RuvA tetramer per ATP hydrolyzed, thus driving DNA branch migration. The RuvB motors rotate together with the DNA substrate, which together with the progressing nucleotide cycle form the mechanistic basis for DNA recombination by continuous HJ branch migration. Branch migration allows RuvC to scan DNA until it finds its consensus sequence, where it cleaves and resolves cruciform DNA. In Methylibium petroleiphilum (strain ATCC BAA-1232 / LMG 22953 / PM1), this protein is Holliday junction branch migration complex subunit RuvB.